A 232-amino-acid chain; its full sequence is Sensory rhodopsin III (232 aa).

The next 7 helical transmembrane spans lie at 5 to 25, 39 to 59, 73 to 93, 100 to 120, 125 to 145, 168 to 188, and 194 to 214; these read IVWY…FVWF, LPPI…LIAG, FADW…LAGV, LAVA…SMSG, IAFA…IKTF, VVTW…TGII, and NFLV…ILLV. The residue at position 205 (Lys205) is an N6-(retinylidene)lysine.

Belongs to the archaeal/bacterial/fungal opsin family. Interacts with HtrM. The covalent binding of retinal to the apoprotein, bacterioopsin, generates bacteriorhodopsin.

The protein localises to the membrane. Sensory rhodopsin. Associates with an unusual transducer lacking a methyl-accepting transducer domain found in all other photosensory transducers. The chromophore is all-trans-retinal in the dark. The sequence is that of Sensory rhodopsin III (xop2) from Haloarcula marismortui (strain ATCC 43049 / DSM 3752 / JCM 8966 / VKM B-1809) (Halobacterium marismortui).